The chain runs to 326 residues: Glycerol-3-phosphate dehydrogenase [NAD(P)+] (326 aa).

Trp-13, Arg-33, and Lys-107 together coordinate NADPH. The sn-glycerol 3-phosphate site is built by Lys-107, Gly-135, and Ser-137. Ala-139 contributes to the NADPH binding site. Positions 190, 243, 253, 254, and 255 each coordinate sn-glycerol 3-phosphate. The Proton acceptor role is filled by Lys-190. An NADPH-binding site is contributed by Arg-254. Residues Leu-273 and Glu-275 each contribute to the NADPH site.

The protein belongs to the NAD-dependent glycerol-3-phosphate dehydrogenase family.

It is found in the cytoplasm. The catalysed reaction is sn-glycerol 3-phosphate + NAD(+) = dihydroxyacetone phosphate + NADH + H(+). It catalyses the reaction sn-glycerol 3-phosphate + NADP(+) = dihydroxyacetone phosphate + NADPH + H(+). The protein operates within membrane lipid metabolism; glycerophospholipid metabolism. In terms of biological role, catalyzes the reduction of the glycolytic intermediate dihydroxyacetone phosphate (DHAP) to sn-glycerol 3-phosphate (G3P), the key precursor for phospholipid synthesis. The protein is Glycerol-3-phosphate dehydrogenase [NAD(P)+] of Brucella ovis (strain ATCC 25840 / 63/290 / NCTC 10512).